Reading from the N-terminus, the 378-residue chain is Acyl-coenzyme A diphosphatase NUDT19 (378 aa).

Residues histidine 7–tyrosine 258 form the Nudix hydrolase domain. Residues serine 105 to glycine 126 carry the Nudix box motif. The Mg(2+) site is built by glutamate 120 and glutamate 124. The Microbody targeting signal signature appears at serine 376 to leucine 378.

The protein belongs to the Nudix hydrolase family. Monomer. Mg(2+) serves as cofactor. The cofactor is Mn(2+).

It localises to the peroxisome. It carries out the reaction an acyl-CoA + H2O = an acyl-4'-phosphopantetheine + adenosine 3',5'-bisphosphate + 2 H(+). It catalyses the reaction CoA + H2O = (R)-4'-phosphopantetheine + adenosine 3',5'-bisphosphate + 2 H(+). The enzyme catalyses hexanoyl-CoA + H2O = hexanoyl-4'-phosphopantetheine + adenosine 3',5'-bisphosphate + 2 H(+). The catalysed reaction is octanoyl-CoA + H2O = S-octanoyl-4'-phosphopantetheine + adenosine 3',5'-bisphosphate + 2 H(+). It carries out the reaction butanoyl-CoA + H2O = S-butanoyl-4'-phosphopantetheine + adenosine 3',5'-bisphosphate + 2 H(+). It catalyses the reaction propanoyl-CoA + H2O = propanoyl-4'-phosphopantetheine + adenosine 3',5'-bisphosphate + 2 H(+). The enzyme catalyses malonyl-CoA + H2O = malonyl-4'-phosphopantetheine + adenosine 3',5'-bisphosphate + 2 H(+). The catalysed reaction is succinyl-CoA + H2O = succinyl-4'-phosphopantetheine + adenosine 3',5'-bisphosphate + 2 H(+). It carries out the reaction choloyl-CoA + H2O = S-choloyl-4'-phosphopantetheine + adenosine 3',5'-bisphosphate + 2 H(+). It catalyses the reaction 4,8-dimethylnonanoyl-CoA + H2O = S-(4,8-dimethylnonanoyl)-4'-phosphopantetheine + adenosine 3',5'-bisphosphate + 2 H(+). The enzyme catalyses (9Z,12Z,15Z)-octadecatrienoyl-CoA + H2O = S-(9Z,12Z,15Z-octadecatrienoyl)-4'-phosphopantetheine + adenosine 3',5'-bisphosphate + 2 H(+). The catalysed reaction is (9Z,12Z)-octadecadienoyl-CoA + H2O = S-(9Z,12Z-octadecadienoyl)-4'-phosphopantetheine + adenosine 3',5'-bisphosphate + 2 H(+). It carries out the reaction (9Z)-hexadecenoyl-CoA + H2O = S-(9Z-hexadecenoyl)-4'-phosphopantetheine + adenosine 3',5'-bisphosphate + 2 H(+). It catalyses the reaction (9Z)-tetradecenoyl-CoA + H2O = S-(9Z-tetradecenoyl)-4'-phosphopantetheine + adenosine 3',5'-bisphosphate + 2 H(+). The enzyme catalyses (6Z)-octenoyl-CoA + H2O = S-(6Z-octenoyl)-4'-phosphopantetheine + adenosine 3',5'-bisphosphate + 2 H(+). The catalysed reaction is hexadecanoyl-CoA + H2O = S-hexadecanoyl-4'-phosphopantetheine + adenosine 3',5'-bisphosphate + 2 H(+). It carries out the reaction tetradecanoyl-CoA + H2O = tetradecanoyl-4'-phosphopantetheine + adenosine 3',5'-bisphosphate + 2 H(+). It catalyses the reaction dodecanoyl-CoA + H2O = S-dodecanoyl-4'-phosphopantetheine + adenosine 3',5'-bisphosphate + 2 H(+). The enzyme catalyses a 5'-end CoA-ribonucleoside in mRNA + H2O = a 5'-end phospho-adenosine-phospho-ribonucleoside in mRNA + (R)-4'-phosphopantetheine + 2 H(+). Functionally, fatty acyl-coenzyme A (CoA) diphosphatase that hydrolyzes fatty acyl-CoA to yield acyl-4'-phosphopantetheine and adenosine 3',5'-bisphosphate. Mediates the hydrolysis of a wide range of CoA esters, including choloyl-CoA and branched-chain fatty-acyl-CoA esters and at low substrate concentrations medium and long-chain fatty-acyl-CoA esters are the primary substrates. Highest activity seen with medium-chain acyl-CoA esters and higher rates of activity seen with the unsaturated acyl-CoA esters compared with the saturated esters. Exhibits decapping activity towards dpCoA-capped RNAs in vitro. This is Acyl-coenzyme A diphosphatase NUDT19 (NUDT19) from Gallus gallus (Chicken).